A 247-amino-acid polypeptide reads, in one-letter code: Peroxisomal membrane protein 11A (247 aa).

At 1-83 (MDAFTRFTNQ…SIHATDLVPR (83 aa)) the chain is on the cytoplasmic side. Residues 84-105 (LCLTLANLNRVIYFICDTILWV) traverse the membrane as a helical segment. Over 106 to 219 (RSVGLTSGIN…DQLGIYKSNP (114 aa)) the chain is Lumenal. A helical transmembrane segment spans residues 220 to 239 (GIIGLGGLVSSIAGMITVAY). Positions 220-239 (GIIGLGGLVSSIAGMITVAY) are required for homodimerization, interaction with PEX11G, and peroxisomal localization. The Cytoplasmic portion of the chain corresponds to 240 to 247 (PQMKLKTR).

It belongs to the peroxin-11 family. In terms of assembly, homodimer. Heterodimer with PEX11G. Probably interacts with COPB2 and COPA. Interacts with PEX19. Interacts with FIS1. Seems not to be N-glycosylated.

It is found in the peroxisome membrane. In terms of biological role, may be involved in peroxisomal proliferation and may regulate peroxisomes division. May mediate binding of coatomer proteins to the peroxisomal membrane. Promotes membrane protrusion and elongation on the peroxisomal surface. This Homo sapiens (Human) protein is Peroxisomal membrane protein 11A (PEX11A).